A 525-amino-acid polypeptide reads, in one-letter code: D-arabinono-1,4-lactone oxidase (525 aa).

Residues 20-195 (IYSSRPEWYF…VGATVRVVPA (176 aa)) enclose the FAD-binding PCMH-type domain. His58 is modified (pros-8alpha-FAD histidine).

Belongs to the oxygen-dependent FAD-linked oxidoreductase family. The cofactor is FAD.

It is found in the mitochondrion membrane. It catalyses the reaction D-arabinono-1,4-lactone + O2 = dehydro-D-arabinono-1,4-lactone + H2O2 + H(+). It functions in the pathway cofactor biosynthesis; D-erythroascorbate biosynthesis; dehydro-D-arabinono-1,4-lactone from D-arabinose: step 2/2. The polypeptide is D-arabinono-1,4-lactone oxidase (ALO1) (Candida glabrata (strain ATCC 2001 / BCRC 20586 / JCM 3761 / NBRC 0622 / NRRL Y-65 / CBS 138) (Yeast)).